The following is a 506-amino-acid chain: Serine/threonine-protein kinase RIO1 (506 aa).

Positions 22-52 (TASSSSDDEPEQAVVKQEKLEAGEQIEEQYD) are disordered. A Protein kinase domain is found at 142-506 (LNIDGCISTG…KKRAHRQHMK (365 aa)). Residues 148 to 156 (ISTGKEANV), lysine 169, and leucine 241 contribute to the ATP site. Aspartate 285 functions as the Proton acceptor in the catalytic mechanism. Asparagine 290 provides a ligand contact to ATP. The Mg(2+) site is built by asparagine 290 and aspartate 302. Aspartate 302 acts as the 4-aspartylphosphate intermediate in catalysis. Positions 418-506 (GDGFGEEHDD…KKRAHRQHMK (89 aa)) are disordered. Residues 424-435 (EHDDSDDNDDEE) show a composition bias toward acidic residues. The span at 454 to 490 (EKERKIAMHTRNREETAEERKERKAAVKEEKREQRKE) shows a compositional bias: basic and acidic residues. Residues 491 to 506 (KIPKHLKKRAHRQHMK) show a composition bias toward basic residues.

Belongs to the protein kinase superfamily. RIO-type Ser/Thr kinase family. Requires Mg(2+) as cofactor. In terms of tissue distribution, expressed in vulva and uterine cells, uterine seam cells (utse), spermatheca and in the nervous system including chemosensory neurons in the head, nerve ring neurons (RID/RIF), inhibitory motor neurons (DA/DD/VA/VD), mechanosensory neurons (ALML/PLML) and tail sensory neurons (DVA//PDA). Also expressed in intestine and pharynx (procorpus) and rectal valve and gland.

The protein localises to the cytoplasm. The enzyme catalyses L-seryl-[protein] + ATP = O-phospho-L-seryl-[protein] + ADP + H(+). It carries out the reaction L-threonyl-[protein] + ATP = O-phospho-L-threonyl-[protein] + ADP + H(+). Functionally, involved in the final steps of cytoplasmic maturation of the 40S ribosomal subunit. Despite the protein kinase domain is proposed to act predominantly as an ATPase. The catalytic activity regulates its dynamic association with the 40S subunit. Plays a role in oogenesis by regulating germ cell proliferation, progression through diplotene and diakinesis stages and oocyte maturation. Regulates germline development probably by regulating the phosphorylation of mpk-1. Involved in larval development. The protein is Serine/threonine-protein kinase RIO1 of Caenorhabditis elegans.